Reading from the N-terminus, the 426-residue chain is Chordin-like protein 2 (426 aa).

Residues 1–25 form the signal peptide; it reads MVPGVRIIPSLLGLVMFWLPLDSQA. VWFC domains are found at residues 31 to 96 and 109 to 175; these read KVCL…PRCV and KSCQ…QTCK. Residue Asn114 is glycosylated (N-linked (GlcNAc...) asparagine). Ser182 is modified (phosphoserine). Residues 182-191 are compositionally biased toward polar residues; that stretch reads STEENLTQLQ. The segment at 182-216 is disordered; sequence STEENLTQLQHGERHSQDPCSERRGPSTPAPTSLS. N-linked (GlcNAc...) asparagine glycosylation occurs at Asn186. The span at 192–206 shows a compositional bias: basic and acidic residues; that stretch reads HGERHSQDPCSERRG. Low complexity predominate over residues 207-216; it reads PSTPAPTSLS. Positions 246–311 constitute a VWFC 3 domain; sequence KACTHNGKTY…VAGKCCKICP (66 aa).

As to quaternary structure, interacts with GDF5. May interact with INHBA, BMP2, BMP4, BMP5, BMP6, and BMP7. As to expression, weakly expressed in the liver and kidney. In reproductive organs expressed in connective tissues such as ligaments of the ovary and oviduct in females, and of testis, epididymis and certain male accessory sex glands in males. Expression was high in uterine myometrium. Weakly expressed in cartilage of the femoral head, patella, articular facets of vertebrae, in the annulus fibrosus of intervertebral disks. In normal cartilage, expression was confined to articular chondrocytes especially in the superficial zone.

It is found in the secreted. In terms of biological role, implicated in tumor angiogenesis. May inhibits BMPs activity by blocking their interaction with their receptors. Has a negative regulator effect on the cartilage formation/regeneration from immature mesenchymal cells, by preventing or reducing the rate of matrix accumulation. May play a role during myoblast and osteoblast differentiation, and maturation. This is Chordin-like protein 2 (Chrdl2) from Mus musculus (Mouse).